The sequence spans 109 residues: MTDLEFMDRAEKLLLAVEQSCDRINDTTDADLDGQRTGGMVTITFRNRSQIVINLQKPLHEIWMAAQSGGYHFRHDGTAWMDTKGAGEFFAALSHNATLQAGEALQFTD.

It belongs to the frataxin family.

In terms of biological role, involved in iron-sulfur (Fe-S) cluster assembly. May act as a regulator of Fe-S biogenesis. This is Iron-sulfur cluster assembly protein CyaY from Acidovorax ebreus (strain TPSY) (Diaphorobacter sp. (strain TPSY)).